The primary structure comprises 211 residues: Probable endo-1,4-beta-xylanase 5 (211 aa).

The N-terminal stretch at 1 to 16 (MKVTAAFASLLLTAFA) is a signal peptide. The GH11 domain occupies 19–210 (APEPVLVSRS…GAGSASVTIS (192 aa)). The active-site Nucleophile is glutamate 106. The active-site Proton donor is the glutamate 197.

The protein belongs to the glycosyl hydrolase 11 (cellulase G) family.

The protein localises to the secreted. The catalysed reaction is Endohydrolysis of (1-&gt;4)-beta-D-xylosidic linkages in xylans.. It functions in the pathway glycan degradation; xylan degradation. In terms of biological role, endo-1,4-beta-xylanase involved in the hydrolysis of xylan, a major structural heterogeneous polysaccharide found in plant biomass representing the second most abundant polysaccharide in the biosphere, after cellulose. The chain is Probable endo-1,4-beta-xylanase 5 (XYN5) from Aspergillus niger (strain ATCC MYA-4892 / CBS 513.88 / FGSC A1513).